The following is a 93-amino-acid chain: UPF0250 protein PA3998 (93 aa).

Belongs to the UPF0250 family.

This is UPF0250 protein PA3998 from Pseudomonas aeruginosa (strain ATCC 15692 / DSM 22644 / CIP 104116 / JCM 14847 / LMG 12228 / 1C / PRS 101 / PAO1).